The following is a 60-amino-acid chain: Large ribosomal subunit protein bL32 (60 aa).

The tract at residues methionine 1–glutamate 60 is disordered. The segment covering serine 11 to leucine 22 has biased composition (basic and acidic residues).

It belongs to the bacterial ribosomal protein bL32 family.

The protein is Large ribosomal subunit protein bL32 of Ectopseudomonas mendocina (strain ymp) (Pseudomonas mendocina).